The following is a 233-amino-acid chain: UPF0725 protein At4g17990 (233 aa).

Belongs to the UPF0725 (EMB2204) family.

This Arabidopsis thaliana (Mouse-ear cress) protein is UPF0725 protein At4g17990.